A 149-amino-acid chain; its full sequence is Glutamyl-tRNA(Gln) amidotransferase subunit C, mitochondrial (149 aa).

The transit peptide at Met-1–Leu-25 directs the protein to the mitochondrion.

This sequence belongs to the GatC family. In terms of assembly, subunit of the heterotrimeric GatCAB amidotransferase (AdT) complex, composed of A, B and C subunits.

The protein localises to the mitochondrion. The enzyme catalyses L-glutamyl-tRNA(Gln) + L-glutamine + ATP + H2O = L-glutaminyl-tRNA(Gln) + L-glutamate + ADP + phosphate + H(+). Its function is as follows. Allows the formation of correctly charged Gln-tRNA(Gln) through the transamidation of misacylated Glu-tRNA(Gln) in the mitochondria. The reaction takes place in the presence of glutamine and ATP through an activated gamma-phospho-Glu-tRNA(Gln). The polypeptide is Glutamyl-tRNA(Gln) amidotransferase subunit C, mitochondrial (Branchiostoma floridae (Florida lancelet)).